The following is a 77-amino-acid chain: Putative snRNP Sm-like protein (77 aa).

The Sm domain occupies 8–77; it reads PTLRMMLDYV…DSVVVITPAA (70 aa).

It belongs to the snRNP Sm proteins family.

In Aeropyrum pernix (strain ATCC 700893 / DSM 11879 / JCM 9820 / NBRC 100138 / K1), this protein is Putative snRNP Sm-like protein.